We begin with the raw amino-acid sequence, 643 residues long: 1-deoxy-D-xylulose-5-phosphate synthase (643 aa).

Thiamine diphosphate-binding positions include His-72 and 113-115 (GHA). Asp-144 contributes to the Mg(2+) binding site. Residues 145–146 (GA), Asn-174, Tyr-287, and Glu-370 contribute to the thiamine diphosphate site. Mg(2+) is bound at residue Asn-174.

The protein belongs to the transketolase family. DXPS subfamily. As to quaternary structure, homodimer. Mg(2+) serves as cofactor. Thiamine diphosphate is required as a cofactor.

The enzyme catalyses D-glyceraldehyde 3-phosphate + pyruvate + H(+) = 1-deoxy-D-xylulose 5-phosphate + CO2. It functions in the pathway metabolic intermediate biosynthesis; 1-deoxy-D-xylulose 5-phosphate biosynthesis; 1-deoxy-D-xylulose 5-phosphate from D-glyceraldehyde 3-phosphate and pyruvate: step 1/1. Catalyzes the acyloin condensation reaction between C atoms 2 and 3 of pyruvate and glyceraldehyde 3-phosphate to yield 1-deoxy-D-xylulose-5-phosphate (DXP). This is 1-deoxy-D-xylulose-5-phosphate synthase from Prochlorococcus marinus (strain SARG / CCMP1375 / SS120).